We begin with the raw amino-acid sequence, 270 residues long: Transmembrane protein 176B (270 aa).

4 helical membrane passes run 65-85 (LALG…GVCL), 95-115 (ASGC…GAIV), 127-147 (VSSL…VLCV), and 209-229 (LFLA…GVGL). Residues S236, S245, S254, and S258 each carry the phosphoserine modification. The interval 237 to 270 (SQPLNEEGSEKRLLGENSVPPSPSREQTSTAIVL) is disordered. The segment covering 260 to 270 (SREQTSTAIVL) has biased composition (polar residues).

It belongs to the TMEM176 family.

The protein resides in the nucleus membrane. May play a role in the process of maturation of dendritic cells. Required for the development of cerebellar granule cells. This Pongo abelii (Sumatran orangutan) protein is Transmembrane protein 176B (TMEM176B).